The primary structure comprises 248 residues: Tetraspanin-17 (248 aa).

Residues 1-7 (MSEVRTG) lie on the Cytoplasmic side of the membrane. Residues 8–28 (FLTMTTIILISIGLTMMGTGL) form a helical membrane-spanning segment. The Extracellular portion of the chain corresponds to 29–44 (YQKTTMSSCIRETSSQ). A helical transmembrane segment spans residues 45-65 (FTLLGLLLLLIPQIGLYGICC). Residues 66 to 69 (RSKR) are Cytoplasmic-facing. A helical membrane pass occupies residues 70-90 (LFNFFFYGMVVLIIIVSYYSI). The Extracellular portion of the chain corresponds to 91-210 (KCSIYNTTFG…ILKAIVHQWK (120 aa)). Residues asparagine 96, asparagine 109, and asparagine 141 are each glycosylated (N-linked (GlcNAc...) asparagine). Residues 211-231 (YLSMFAYPALVLSCISLAIAW) form a helical membrane-spanning segment. The Cytoplasmic segment spans residues 232–248 (SLKETIHENEDYRGSYS).

Belongs to the tetraspanin (TM4SF) family.

It is found in the membrane. Functionally, may be involved in the regulation of cell differentiation. The polypeptide is Tetraspanin-17 (TET17) (Arabidopsis thaliana (Mouse-ear cress)).